The primary structure comprises 262 residues: Carbonic anhydrase 13 (262 aa).

The region spanning Leu-4–Phe-261 is the Alpha-carbonic anhydrase domain. Catalysis depends on His-65, which acts as the Proton donor/acceptor. Residues His-95, His-97, and His-120 each contribute to the Zn(2+) site. Thr-200–Val-201 provides a ligand contact to substrate.

Belongs to the alpha-carbonic anhydrase family. It depends on Zn(2+) as a cofactor. In terms of tissue distribution, expressed in spleen, lung, kidney, heart, brain, skeletal muscle and testis.

The enzyme catalyses hydrogencarbonate + H(+) = CO2 + H2O. Inhibited by coumarins, sulfonamide derivatives such as acetazolamide (AZA) and Foscarnet (phosphonoformate trisodium salt). In terms of biological role, reversible hydration of carbon dioxide. This Mus musculus (Mouse) protein is Carbonic anhydrase 13 (Ca13).